The primary structure comprises 444 residues: Glutamate-1-semialdehyde 2,1-aminomutase (444 aa).

Lysine 278 is modified (N6-(pyridoxal phosphate)lysine).

Belongs to the class-III pyridoxal-phosphate-dependent aminotransferase family. HemL subfamily. Homodimer. Requires pyridoxal 5'-phosphate as cofactor.

Its subcellular location is the cytoplasm. The catalysed reaction is (S)-4-amino-5-oxopentanoate = 5-aminolevulinate. It participates in porphyrin-containing compound metabolism; protoporphyrin-IX biosynthesis; 5-aminolevulinate from L-glutamyl-tRNA(Glu): step 2/2. The sequence is that of Glutamate-1-semialdehyde 2,1-aminomutase from Deinococcus radiodurans (strain ATCC 13939 / DSM 20539 / JCM 16871 / CCUG 27074 / LMG 4051 / NBRC 15346 / NCIMB 9279 / VKM B-1422 / R1).